The primary structure comprises 809 residues: Trimethylamine-N-oxide reductase 2 (809 aa).

A signal peptide (tat-type signal) is located at residues Met-1–Ala-31. Ser-176 lines the Mo-bis(molybdopterin guanine dinucleotide) pocket.

It belongs to the prokaryotic molybdopterin-containing oxidoreductase family. The cofactor is Mo-bis(molybdopterin guanine dinucleotide). Post-translationally, predicted to be exported by the Tat system. The position of the signal peptide cleavage has not been experimentally proven.

It localises to the periplasm. The enzyme catalyses trimethylamine + 2 Fe(III)-[cytochrome c] + H2O = trimethylamine N-oxide + 2 Fe(II)-[cytochrome c] + 3 H(+). In terms of biological role, reduces trimethylamine-N-oxide (TMAO) into trimethylamine; an anaerobic reaction coupled to energy-yielding reactions. Can also reduce other N- and S-oxide compounds such as 4-methylmorpholine-N-oxide and biotin sulfoxide (BSO), but with a lower catalytic efficiency. The chain is Trimethylamine-N-oxide reductase 2 (torZ) from Escherichia coli O157:H7.